The sequence spans 357 residues: MARILVGLSGGVDSSVAAALLVEQGHDVVGAYMKNWVNDEGIPGECPWEQDIQDALAVAKTTGIEFRVIDLVDEYRARIVNYLIEGYRAGYTPNPDVLCNREMKFGVFLDYALEQGFDYVATGHYARRMDTPQGAFILRGRDPNKDQSYFLSLMRPDQIARAVFPLGDLLKPEVRVLAEKYGLPTARKKDSQGICFIGQVKMSDFLRHYLPDKPGNIVDTEGRTLGTHNGLHLFTMGQRKGHGVASPREGVAYVVVGKDVRRNRLILGYEDASTRGLYASRAVVGGISNTLAPLPARVMAQPRYRAKAEWASCEYLEEGKVRLGFDTPLRALAVGQVCAFYDGGKLLGGGFFESIEP.

ATP is bound by residues 7–14 (GLSGGVDS) and Met-33. The interaction with target base in tRNA stretch occupies residues 94–96 (NPD). Cys-99 (nucleophile) is an active-site residue. Cys-99 and Cys-195 are joined by a disulfide. Gly-123 contacts ATP. Residues 145 to 147 (KDQ) are interaction with tRNA. Residue Cys-195 is the Cysteine persulfide intermediate of the active site. An interaction with tRNA region spans residues 303–304 (RY).

It belongs to the MnmA/TRMU family.

Its subcellular location is the cytoplasm. It carries out the reaction S-sulfanyl-L-cysteinyl-[protein] + uridine(34) in tRNA + AH2 + ATP = 2-thiouridine(34) in tRNA + L-cysteinyl-[protein] + A + AMP + diphosphate + H(+). Functionally, catalyzes the 2-thiolation of uridine at the wobble position (U34) of tRNA, leading to the formation of s(2)U34. This Akkermansia muciniphila (strain ATCC BAA-835 / DSM 22959 / JCM 33894 / BCRC 81048 / CCUG 64013 / CIP 107961 / Muc) protein is tRNA-specific 2-thiouridylase MnmA.